The sequence spans 110 residues: UPF0145 protein MTH_507 (110 aa).

This sequence belongs to the UPF0145 family.

The sequence is that of UPF0145 protein MTH_507 from Methanothermobacter thermautotrophicus (strain ATCC 29096 / DSM 1053 / JCM 10044 / NBRC 100330 / Delta H) (Methanobacterium thermoautotrophicum).